The sequence spans 96 residues: Dynein light chain roadblock-type 2 (96 aa).

A2 is subject to N-acetylalanine.

Belongs to the GAMAD family. As to quaternary structure, homodimer. The cytoplasmic dynein 1 complex consists of two catalytic heavy chains (HCs) and a number of non-catalytic subunits presented by intermediate chains (ICs), light intermediate chains (LICs) and light chains (LCs); the composition seems to vary in respect to the IC, LIC and LC composition. The heavy chain homodimer serves as a scaffold for the probable homodimeric assembly of the respective non-catalytic subunits. The ICs and LICs bind directly to the HC dimer and the LCs assemble on the IC dimer. Interacts with DYNC1I1 and DYNC1I2. Self-associates. Interacts with DYNLRB1. In terms of tissue distribution, high expression in heart, brain, placenta, skeletal muscle, prostate and small intestine; moderate in kidney, pancreas, spleen, testis, ovary and colon; low in lung, liver, thymus and leukocyte.

The protein localises to the cytoplasm. The protein resides in the cytoskeleton. Functionally, acts as one of several non-catalytic accessory components of the cytoplasmic dynein 1 complex that are thought to be involved in linking dynein to cargos and to adapter proteins that regulate dynein function. Cytoplasmic dynein 1 acts as a motor for the intracellular retrograde motility of vesicles and organelles along microtubules. This Homo sapiens (Human) protein is Dynein light chain roadblock-type 2 (DYNLRB2).